The chain runs to 1749 residues: Kinesin-like protein KIF13A (1749 aa).

The Kinesin motor domain occupies 5–352 (KVKVAVRVRP…LRYADRAKRI (348 aa)). 102 to 109 (GQTGSGKS) is a binding site for ATP. Residues 359-431 (NEDPNAKVIR…QERQRQLESM (73 aa)) adopt a coiled-coil conformation. Residues 469–519 (HTRVGADTSQDIQLFGIGIQPEHCEIDIAADGDITLTPKENARSCVNGTLV) enclose the FHA domain. Residues 552–775 (LKDFERETSS…VPEAKRLYGK (224 aa)) adopt a coiled-coil conformation. 2 disordered regions span residues 633-652 (QQLS…LAYS) and 834-853 (IPER…SGSL). Phosphoserine is present on Ser-636. A coiled-coil region spans residues 1086 to 1126 (SDALIKRREYLDEQIKKVSNKKEKTEDDMEREARLVEQWVG). The residue at position 1274 (Ser-1274) is a Phosphoserine. A compositionally biased stretch (polar residues) spans 1370-1383 (LSTPNVHNVSSSRP). Disordered stretches follow at residues 1370–1402 (LSTP…QLDV) and 1417–1436 (TLPR…ENPH). The segment covering 1421 to 1430 (DSPRRSKEGC) has biased composition (basic and acidic residues). Phosphoserine occurs at positions 1441, 1477, 1481, 1524, 1600, and 1650. A coiled-coil region spans residues 1475-1499 (LLSQEDSEEEENELEALSRKLMLTQ). Disordered stretches follow at residues 1584-1665 (CAEP…GHQA) and 1698-1749 (DFDG…TATR). Residues 1719–1741 (ETDHKGIPERPPDADRLHPKIEN) are compositionally biased toward basic and acidic residues.

This sequence belongs to the TRAFAC class myosin-kinesin ATPase superfamily. Kinesin family. As to quaternary structure, interacts with AP1G1 and AP1G2. Interacts with ZFYVE26. Interacts with AP2B1.

It is found in the golgi apparatus membrane. The protein resides in the cytoplasm. The protein localises to the cytoskeleton. It localises to the microtubule organizing center. Its subcellular location is the centrosome. It is found in the midbody. The protein resides in the endosome membrane. Its function is as follows. Plus end-directed microtubule-dependent motor protein involved in intracellular transport and regulating various processes such as mannose-6-phosphate receptor (M6PR) transport to the plasma membrane, endosomal sorting during melanosome biogenesis and cytokinesis. During melanosome maturation, required for delivering melanogenic enzymes from recycling endosomes to nascent melanosomes by creating peripheral recycling endosomal subdomains in melanocytes. Also required for the abscission step in cytokinesis: mediates translocation of ZFYVE26, and possibly TTC19, to the midbody during cytokinesis. Mediates the transport of M6PR-containing vesicles from trans-Golgi network to the plasma membrane via direct interaction with the AP-1 complex. The chain is Kinesin-like protein KIF13A (Kif13a) from Mus musculus (Mouse).